The following is a 248-amino-acid chain: 3-deoxy-manno-octulosonate cytidylyltransferase (248 aa).

Belongs to the KdsB family.

It is found in the cytoplasm. It carries out the reaction 3-deoxy-alpha-D-manno-oct-2-ulosonate + CTP = CMP-3-deoxy-beta-D-manno-octulosonate + diphosphate. It functions in the pathway nucleotide-sugar biosynthesis; CMP-3-deoxy-D-manno-octulosonate biosynthesis; CMP-3-deoxy-D-manno-octulosonate from 3-deoxy-D-manno-octulosonate and CTP: step 1/1. It participates in bacterial outer membrane biogenesis; lipopolysaccharide biosynthesis. Functionally, activates KDO (a required 8-carbon sugar) for incorporation into bacterial lipopolysaccharide in Gram-negative bacteria. This Cronobacter sakazakii (strain ATCC BAA-894) (Enterobacter sakazakii) protein is 3-deoxy-manno-octulosonate cytidylyltransferase.